We begin with the raw amino-acid sequence, 269 residues long: Protein NETWORKED 3A (269 aa).

The 82-residue stretch at 6-87 (SKWWWIGNHN…ERYDLLRPSS (82 aa)) folds into the NAB domain. The disordered stretch occupies residues 87-113 (SVHKHGSDSESHEKSSTCDESSWSEAC). The span at 91 to 103 (HGSDSESHEKSST) shows a compositional bias: basic and acidic residues. A coiled-coil region spans residues 155–214 (NGNSEMMKIEIERLREENKVYSEMVREKDEEKREAIRQMSVAIQMLKEENSELKKRVTNT).

This sequence belongs to the NET family.

It is found in the cytoplasm. The protein resides in the cytoskeleton. Its subcellular location is the nucleus membrane. In terms of biological role, plant-specific actin binding protein. May be part of a membrane-cytoskeletal adapter complex. This chain is Protein NETWORKED 3A, found in Arabidopsis thaliana (Mouse-ear cress).